Here is a 495-residue protein sequence, read N- to C-terminus: Phage-like element PBSX protein XkdE (495 aa).

This sequence belongs to the phage portal family. PBSX subfamily.

The sequence is that of Phage-like element PBSX protein XkdE (xkdE) from Bacillus subtilis (strain 168).